Consider the following 312-residue polypeptide: Ribosomal RNA small subunit methyltransferase H (312 aa).

Residues 38 to 40 (GGH), Asp-58, Phe-84, Asp-104, and Gln-111 each bind S-adenosyl-L-methionine.

Belongs to the methyltransferase superfamily. RsmH family.

Its subcellular location is the cytoplasm. It carries out the reaction cytidine(1402) in 16S rRNA + S-adenosyl-L-methionine = N(4)-methylcytidine(1402) in 16S rRNA + S-adenosyl-L-homocysteine + H(+). In terms of biological role, specifically methylates the N4 position of cytidine in position 1402 (C1402) of 16S rRNA. This Alcanivorax borkumensis (strain ATCC 700651 / DSM 11573 / NCIMB 13689 / SK2) protein is Ribosomal RNA small subunit methyltransferase H.